Reading from the N-terminus, the 261-residue chain is Guanine nucleotide exchange factor BopE (261 aa).

A compositionally biased stretch (basic and acidic residues) spans 241–253 (RRAAQDASRDEKG). The interval 241 to 261 (RRAAQDASRDEKGAANAADGA) is disordered.

This sequence belongs to the GEF (guanine exchange factor) SopE family. As to quaternary structure, monomer. Interacts with human CDC42.

The protein localises to the secreted. In terms of biological role, activator for both CDC42 and RAC1 by directly interacting with these Rho GTPases and acting as a guanine nucleotide exchange factor (GEF). This activation results in actin cytoskeleton rearrangements and stimulates membrane ruffling, thus promoting bacterial entry into non-phagocytic cells. This is Guanine nucleotide exchange factor BopE (bopE) from Burkholderia thailandensis (strain ATCC 700388 / DSM 13276 / CCUG 48851 / CIP 106301 / E264).